The primary structure comprises 446 residues: Tryptophan dimethylallyltransferase (446 aa).

L-tryptophan contacts are provided by residues 83 to 84 and glutamate 92; that span reads IL. Residues arginine 103, lysine 189, and tyrosine 191 each coordinate substrate. Positions 193 and 246 each coordinate L-tryptophan. Substrate contacts are provided by arginine 259, lysine 261, tyrosine 263, glutamine 345, and tyrosine 347.

The protein belongs to the tryptophan dimethylallyltransferase family. In terms of assembly, homodimer.

The catalysed reaction is L-tryptophan + dimethylallyl diphosphate = 4-(3-methylbut-2-enyl)-L-tryptophan + diphosphate. The protein operates within alkaloid biosynthesis; ergot alkaloid biosynthesis. In terms of biological role, tryptophan dimethylallyltransferase; part of the gene cluster that mediates the biosynthesis of fungal ergot alkaloid. DmaW catalyzes the first step of ergot alkaloid biosynthesis by condensing dimethylallyl diphosphate (DMAP) and tryptophan to form 4-dimethylallyl-L-tryptophan. The second step is catalyzed by the methyltransferase easF that methylates 4-dimethylallyl-L-tryptophan in the presence of S-adenosyl-L-methionine, resulting in the formation of 4-dimethylallyl-L-abrine. The catalase easC and the FAD-dependent oxidoreductase easE then transform 4-dimethylallyl-L-abrine to chanoclavine-I which is further oxidized by easD in the presence of NAD(+), resulting in the formation of chanoclavine-I aldehyde. Chanoclavine-I aldehyde is the precursor of ergoamides and ergopeptines in Clavicipitaceae, and clavine-type alcaloids such as fumiclavine in Trichocomaceae. However, the metabolites downstream of chanoclavine-I aldehyde in Arthrodermataceae have not been identified yet. This is Tryptophan dimethylallyltransferase from Arthroderma otae (strain ATCC MYA-4605 / CBS 113480) (Microsporum canis).